The following is a 413-amino-acid chain: Alpha-1-antitrypsin-like protein GS55-MS (413 aa).

The first 24 residues, 1–24, serve as a signal peptide directing secretion; that stretch reads MPSSISWGLLLLAGLSCLVAGSLA. 3 N-linked (GlcNAc...) asparagine glycosylation sites follow: N65, N102, and N266. The tract at residues 368–387 is RCL; the sequence is GATFLEMMPMSLPPEVKFDK.

Belongs to the serpin family.

It is found in the secreted. Functionally, inhibitor of serine proteases. Its primary target is elastase, but it also has a moderate affinity for plasmin and thrombin. The sequence is that of Alpha-1-antitrypsin-like protein GS55-MS from Ictidomys tridecemlineatus (Thirteen-lined ground squirrel).